The chain runs to 264 residues: 3-methyl-2-oxobutanoate hydroxymethyltransferase (264 aa).

Residues aspartate 45 and aspartate 84 each contribute to the Mg(2+) site. 3-methyl-2-oxobutanoate is bound by residues aspartate 45–serine 46, aspartate 84, and lysine 112. Mg(2+) is bound at residue glutamate 114. The active-site Proton acceptor is glutamate 181.

It belongs to the PanB family. As to quaternary structure, homodecamer; pentamer of dimers. Requires Mg(2+) as cofactor.

It localises to the cytoplasm. It carries out the reaction 3-methyl-2-oxobutanoate + (6R)-5,10-methylene-5,6,7,8-tetrahydrofolate + H2O = 2-dehydropantoate + (6S)-5,6,7,8-tetrahydrofolate. Its pathway is cofactor biosynthesis; (R)-pantothenate biosynthesis; (R)-pantoate from 3-methyl-2-oxobutanoate: step 1/2. Catalyzes the reversible reaction in which hydroxymethyl group from 5,10-methylenetetrahydrofolate is transferred onto alpha-ketoisovalerate to form ketopantoate. The polypeptide is 3-methyl-2-oxobutanoate hydroxymethyltransferase (Shewanella oneidensis (strain ATCC 700550 / JCM 31522 / CIP 106686 / LMG 19005 / NCIMB 14063 / MR-1)).